The chain runs to 714 residues: Phosphate acetyltransferase (714 aa).

Residues 390 to 714 (AFRYQLTELA…TAIQASQQQQ (325 aa)) are phosphate acetyltransferase.

It in the N-terminal section; belongs to the CobB/CobQ family. In the C-terminal section; belongs to the phosphate acetyltransferase and butyryltransferase family. As to quaternary structure, homohexamer.

Its subcellular location is the cytoplasm. The catalysed reaction is acetyl-CoA + phosphate = acetyl phosphate + CoA. The enzyme catalyses propanoyl-CoA + phosphate = propanoyl phosphate + CoA. The protein operates within metabolic intermediate biosynthesis; acetyl-CoA biosynthesis; acetyl-CoA from acetate: step 2/2. Its activity is regulated as follows. Allosterically inhibited by NADH. Involved in acetate metabolism. Catalyzes the reversible interconversion of acetyl-CoA and acetyl phosphate. The direction of the overall reaction changes depending on growth conditions. Required for acetate recapture but not for acetate excretion when this organism is grown on ethanolamine (EA); is unable to complement an eutD deletion during growth on EA. Works with proprionate kinase PduW to capture exogenous propionate and regenerate propionyl-CoA during degradation of propionate and 1,2-propanediol (1,2-PD). The protein is Phosphate acetyltransferase (pta) of Salmonella typhimurium (strain LT2 / SGSC1412 / ATCC 700720).